Here is a 233-residue protein sequence, read N- to C-terminus: Small ribosomal subunit protein uS3 (233 aa).

The KH type-2 domain maps to 39-107 (VRQYLKKELA…PAQINISEVR (69 aa)).

Belongs to the universal ribosomal protein uS3 family. Part of the 30S ribosomal subunit. Forms a tight complex with proteins S10 and S14.

Binds the lower part of the 30S subunit head. Binds mRNA in the 70S ribosome, positioning it for translation. This Photorhabdus laumondii subsp. laumondii (strain DSM 15139 / CIP 105565 / TT01) (Photorhabdus luminescens subsp. laumondii) protein is Small ribosomal subunit protein uS3.